A 465-amino-acid chain; its full sequence is UDP-N-acetylmuramate--L-alanine ligase (465 aa).

112–118 is an ATP binding site; it reads GTHGKTT.

Belongs to the MurCDEF family.

The protein localises to the cytoplasm. The enzyme catalyses UDP-N-acetyl-alpha-D-muramate + L-alanine + ATP = UDP-N-acetyl-alpha-D-muramoyl-L-alanine + ADP + phosphate + H(+). The protein operates within cell wall biogenesis; peptidoglycan biosynthesis. Its function is as follows. Cell wall formation. The sequence is that of UDP-N-acetylmuramate--L-alanine ligase from Burkholderia vietnamiensis (strain G4 / LMG 22486) (Burkholderia cepacia (strain R1808)).